We begin with the raw amino-acid sequence, 403 residues long: Chromatin structure-remodeling complex subunit SFH1 (403 aa).

The tract at residues 58 to 115 is disordered; sequence FPTFDIDSDSNDEEQSSASAGNDDPQANANGGEAAGVNGQGSGDGGSANTGAGRHGKS. A compositionally biased stretch (acidic residues) spans 63-72; the sequence is IDSDSNDEEQ. Over residues 84–94 the composition is skewed to low complexity; the sequence is ANANGGEAAGV. The span at 95 to 105 shows a compositional bias: gly residues; the sequence is NGQGSGDGGSA.

It belongs to the SNF5 family.

It is found in the nucleus. Part of the chromatin structure-remodeling complex (RSC) which is involved in transcription regulation and nucleosome positioning. RSC is responsible for the transfer of a histone octamer from a nucleosome core particle to naked DNA. The reaction requires ATP and involves an activated RSC-nucleosome intermediate. Remodeling reaction also involves DNA translocation, DNA twist and conformational change. As a reconfigurer of centromeric and flanking nucleosomes, RSC complex is required both for proper kinetochore function in chromosome segregation and, via a PKC1-dependent signaling pathway, for organization of the cellular cytoskeleton. This subunit is essential for mitotic growth and required for cell cycle progression. The sequence is that of Chromatin structure-remodeling complex subunit SFH1 (SFH1) from Candida glabrata (strain ATCC 2001 / BCRC 20586 / JCM 3761 / NBRC 0622 / NRRL Y-65 / CBS 138) (Yeast).